Reading from the N-terminus, the 297-residue chain is HTH-type transcriptional regulator ArgP (297 aa).

Residues 4 to 60 (PDYRTLQALDAVIRERGFERAAQKLCITQSAVSQRIKQLENMFGQPLLVRTVPPRPT) form the HTH lysR-type domain. Positions 21–40 (FERAAQKLCITQSAVSQRIK) form a DNA-binding region, H-T-H motif.

It belongs to the LysR transcriptional regulatory family. As to quaternary structure, homodimer.

Its function is as follows. Controls the transcription of genes involved in arginine and lysine metabolism. This is HTH-type transcriptional regulator ArgP from Salmonella arizonae (strain ATCC BAA-731 / CDC346-86 / RSK2980).